The primary structure comprises 298 residues: Multifunctional dioxygenase ausE (298 aa).

2 residues coordinate substrate: R72 and Q127. Fe cation contacts are provided by H130 and D132. A substrate-binding site is contributed by T167. Position 214 (H214) interacts with Fe cation. R226 is a binding site for substrate.

It belongs to the PhyH family. Homodimer. It depends on Fe cation as a cofactor.

It carries out the reaction preaustinoid A1 + 2-oxoglutarate + O2 = preaustinoid A2 + succinate + CO2 + H2O. The enzyme catalyses preaustinoid A2 + 2-oxoglutarate + O2 = preaustinoid A3 + succinate + CO2 + H2O. It catalyses the reaction berkeleyone A + 2-oxoglutarate + O2 = preaustinoid A + succinate + CO2 + H2O. The protein operates within secondary metabolite biosynthesis; terpenoid biosynthesis. Functionally, multifunctional dioxygenase; part of the gene cluster B that mediates the biosynthesis of austinol and dehydroaustinol, two fungal meroterpenoids. The first step of the pathway is the synthesis of 3,5-dimethylorsellinic acid by the polyketide synthase ausA. 3,5-dimethylorsellinic acid is then prenylated by the polyprenyl transferase ausN. Further epoxidation by the FAD-dependent monooxygenase ausM and cyclization by the probable terpene cyclase ausL lead to the formation of protoaustinoid A. Protoaustinoid A is then oxidized to spiro-lactone preaustinoid A3 by the combined action of the FAD-binding monooxygenases ausB and ausC, and the dioxygenase ausE. Acid-catalyzed keto-rearrangement and ring contraction of the tetraketide portion of preaustinoid A3 by ausJ lead to the formation of preaustinoid A4. The aldo-keto reductase ausK, with the help of ausH, is involved in the next step by transforming preaustinoid A4 into isoaustinone which is in turn hydroxylated by the P450 monooxygenase ausI to form austinolide. Finally, the cytochrome P450 monooxygenase ausG modifies austinolide to austinol. Austinol can be further modified to dehydroaustinol which forms a diffusible complex with diorcinol that initiates conidiation. Due to genetic rearrangements of the clusters and the subsequent loss of some enzymes, the end products of the Emericella nidulans austinoid biosynthesis clusters are austinol and dehydroaustinol, even if additional enzymes, such as the O-acetyltransferase ausQ and the cytochrome P450 monooxygenase ausR are still functional. The chain is Multifunctional dioxygenase ausE from Emericella nidulans (strain FGSC A4 / ATCC 38163 / CBS 112.46 / NRRL 194 / M139) (Aspergillus nidulans).